The sequence spans 73 residues: Small ribosomal subunit protein bS18 (73 aa).

It belongs to the bacterial ribosomal protein bS18 family. As to quaternary structure, part of the 30S ribosomal subunit. Forms a tight heterodimer with protein bS6.

Functionally, binds as a heterodimer with protein bS6 to the central domain of the 16S rRNA, where it helps stabilize the platform of the 30S subunit. The protein is Small ribosomal subunit protein bS18 of Prochlorococcus marinus (strain SARG / CCMP1375 / SS120).